Here is a 190-residue protein sequence, read N- to C-terminus: Protein GrpE (190 aa).

Residues 1-18 (MTETPNTSSEEIQTSEPS) are compositionally biased toward polar residues. The tract at residues 1–21 (MTETPNTSSEEIQTSEPSPDN) is disordered.

It belongs to the GrpE family. In terms of assembly, homodimer.

Its subcellular location is the cytoplasm. Functionally, participates actively in the response to hyperosmotic and heat shock by preventing the aggregation of stress-denatured proteins, in association with DnaK and GrpE. It is the nucleotide exchange factor for DnaK and may function as a thermosensor. Unfolded proteins bind initially to DnaJ; upon interaction with the DnaJ-bound protein, DnaK hydrolyzes its bound ATP, resulting in the formation of a stable complex. GrpE releases ADP from DnaK; ATP binding to DnaK triggers the release of the substrate protein, thus completing the reaction cycle. Several rounds of ATP-dependent interactions between DnaJ, DnaK and GrpE are required for fully efficient folding. The polypeptide is Protein GrpE (Chlamydia trachomatis serovar L2 (strain ATCC VR-902B / DSM 19102 / 434/Bu)).